Consider the following 152-residue polypeptide: uncharacterized protein (152 aa).

This is an uncharacterized protein from Homo sapiens (Human).